The primary structure comprises 545 residues: Glucose-6-phosphate isomerase (545 aa).

Residue Glu-351 is the Proton donor of the active site. Active-site residues include His-382 and Lys-510.

It belongs to the GPI family.

It localises to the cytoplasm. It catalyses the reaction alpha-D-glucose 6-phosphate = beta-D-fructose 6-phosphate. It functions in the pathway carbohydrate biosynthesis; gluconeogenesis. Its pathway is carbohydrate degradation; glycolysis; D-glyceraldehyde 3-phosphate and glycerone phosphate from D-glucose: step 2/4. In terms of biological role, catalyzes the reversible isomerization of glucose-6-phosphate to fructose-6-phosphate. This chain is Glucose-6-phosphate isomerase, found in Shewanella frigidimarina (strain NCIMB 400).